The sequence spans 381 residues: N-acetyl-alpha-D-glucosaminyl L-malate synthase (381 aa).

The (S)-malate site is built by S16, Y94, and T122. The UDP site is built by N206, Q262, and E290.

This sequence belongs to the glycosyltransferase group 1 family. Glycosyltransferase 4 subfamily. In terms of assembly, dimer of tetramers.

The enzyme catalyses (S)-malate + UDP-N-acetyl-alpha-D-glucosamine = (S)-malyl N-acetyl-alpha-D-glucosaminide + UDP + H(+). Functionally, involved in bacillithiol (BSH) biosynthesis. Catalyzes the first step of the pathway, the formation of N-acetylglucosaminylmalate (GlcNAc-Mal) from UDP-N-acetylglucosamine (UDP-GlcNAc) and L-malate. The chain is N-acetyl-alpha-D-glucosaminyl L-malate synthase from Bacillus anthracis.